Reading from the N-terminus, the 858-residue chain is MPALAIMGLSLAAFLELGMGASLCLSQQFKAQGDYILGGLFPLGSTEEATLNQRTQPNSIPCNRFSPLGLFLAMAMKMAVEEINNGSALLPGLRLGYDLFDTCSEPVVTMKSSLMFLAKVGSQSIAAYCNYTQYQPRVLAVIGPHSSELALITGKFFSFFLMPQVSYSASMDRLSDRETFPSFFRTVPSDRVQLQAVVTLLQNFSWNWVAALGSDDDYGREGLSIFSSLANARGICIAHEGLVPQHDTSGQQLGKVLDVLRQVNQSKVQVVVLFASARAVYSLFSYSIHHGLSPKVWVASESWLTSDLVMTLPNIARVGTVLGFLQRGALLPEFSHYVETHLALAADPAFCASLNAELDLEEHVMGQRCPRCDDIMLQNLSSGLLQNLSAGQLHHQIFATYAAVYSVAQALHNTLQCNVSHCHVSEHVLPWQLLENMYNMSFHARDLTLQFDAEGNVDMEYDLKMWVWQSPTPVLHTVGTFNGTLQLQQSKMYWPGNQVPVSQCSRQCKDGQVRRVKGFHSCCYDCVDCKAGSYRKHPDDFTCTPCNQDQWSPEKSTACLPRRPKFLAWGEPVVLSLLLLLCLVLGLALAALGLSVHHWDSPLVQASGGSQFCFGLICLGLFCLSVLLFPGRPSSASCLAQQPMAHLPLTGCLSTLFLQAAETFVESELPLSWANWLCSYLRGLWAWLVVLLATFVEAALCAWYLIAFPPEVVTDWSVLPTEVLEHCHVRSWVSLGLVHITNAMLAFLCFLGTFLVQSQPGRYNRARGLTFAMLAYFITWVSFVPLLANVQVAYQPAVQMGAILVCALGILVTFHLPKCYVLLWLPKLNTQEFFLGRNAKKAADENSGGGEAAQGHNE.

The N-terminal stretch at 1 to 20 (MPALAIMGLSLAAFLELGMG) is a signal peptide. Over 21 to 572 (ASLCLSQQFK…RPKFLAWGEP (552 aa)) the chain is Extracellular. An N-linked (GlcNAc...) asparagine; when associated with variant T-60 glycan is attached at asparagine 58. N-linked (GlcNAc...) asparagine glycosylation is found at asparagine 85, asparagine 130, asparagine 203, asparagine 264, asparagine 379, asparagine 387, asparagine 418, asparagine 439, and asparagine 482. A helical membrane pass occupies residues 573–593 (VVLSLLLLLCLVLGLALAALG). The Cytoplasmic portion of the chain corresponds to 594–610 (LSVHHWDSPLVQASGGS). Residues 611–631 (QFCFGLICLGLFCLSVLLFPG) form a helical membrane-spanning segment. The Extracellular portion of the chain corresponds to 632–644 (RPSSASCLAQQPM). The helical transmembrane segment at 645-665 (AHLPLTGCLSTLFLQAAETFV) threads the bilayer. At 666 to 687 (ESELPLSWANWLCSYLRGLWAW) the chain is on the cytoplasmic side. Residues 688 to 708 (LVVLLATFVEAALCAWYLIAF) form a helical membrane-spanning segment. The Extracellular portion of the chain corresponds to 709–735 (PPEVVTDWSVLPTEVLEHCHVRSWVSL). The chain crosses the membrane as a helical span at residues 736 to 756 (GLVHITNAMLAFLCFLGTFLV). The Cytoplasmic portion of the chain corresponds to 757–767 (QSQPGRYNRAR). A helical membrane pass occupies residues 768 to 788 (GLTFAMLAYFITWVSFVPLLA). The Extracellular portion of the chain corresponds to 789–796 (NVQVAYQP). A helical membrane pass occupies residues 797–817 (AVQMGAILVCALGILVTFHLP). Residues 818 to 858 (KCYVLLWLPKLNTQEFFLGRNAKKAADENSGGGEAAQGHNE) lie on the Cytoplasmic side of the membrane.

Belongs to the G-protein coupled receptor 3 family. TAS1R subfamily. Forms homodimers or heterodimers with TAS1R1 and TAS1R2. Post-translationally, the Thr-60 variant is predicted to introduce a novel N-linked glycosylation site at Asn-58. The addition of even a short carbohydrate group at Asn-58 is predicted to disrupt one of the contact surfaces required for stability of a dimer. Therefore a Thr-60 variant N-glycosylated at Asn-58 is predicted to be precluded from forming homodimers or heterodimers. In terms of tissue distribution, expressed in circumvallate, foliate and fungiform taste papillae as well as in taste buds on the palate. Also expressed in testis. Not expressed in brain, heart, kidney, liver or spleen. The topographic distribution in various taste papillae is different from those of other T1R members.

The protein localises to the cell membrane. In terms of biological role, putative taste receptor. TAS1R1/TAS1R3 responds to the umami taste stimulus (the taste of monosodium glutamate) and also to most of the 20 standard L-amino acids, but not to their D-enantiomers or other compounds. TAS1R2/TAS1R3 recognizes diverse natural and synthetic sweeteners. TAS1R3 is essential for the recognition and response to the disaccharide trehalose. Sequence differences within and between species can significantly influence the selectivity and specificity of taste responses. This chain is Taste receptor type 1 member 3 (Tas1r3), found in Mus musculus (Mouse).